We begin with the raw amino-acid sequence, 361 residues long: Cdc42 effector protein 1 (361 aa).

The segment at 1–29 (MPGPQGAGGAPAMNLGKLSPVGWVSSSQG) is disordered. Phosphoserine is present on residues Ser19 and Ser27. Thr34 is modified (phosphothreonine). The 15-residue stretch at 38–52 (ISPPLGDFRHTMHVG) folds into the CRIB domain. Position 39 is a phosphoserine (Ser39). Arg53 is subject to Omega-N-methylarginine. Ser65, Ser73, Ser77, Ser101, Ser113, Ser121, Ser139, Ser180, Ser190, Ser192, and Ser195 each carry phosphoserine. Positions 161-186 (CTISRLPRPEKPRDRDRDSSFPAEPE) are disordered. The segment covering 167-186 (PRPEKPRDRDRDSSFPAEPE) has biased composition (basic and acidic residues). 2 disordered regions span residues 218 to 300 (EGSA…SRHH) and 320 to 361 (SWGS…EVKV). 4 tandem repeats follow at residues 220 to 226 (SAAETPA), 229 to 235 (PAASPPA), 236 to 242 (SVANPPA), and 243 to 249 (PASSPSL). Positions 220-249 (SAAETPAPAPAASPPASVANPPAPASSPSL) are 4 X 7 AA tandem repeats of [PT]-[AT]-A-[ENT]-[PT]-[PTS]-[AG]. A phosphoserine mark is found at Ser270, Ser320, and Ser323. The segment covering 332–347 (QAGSRTPVPSTVQANT) has biased composition (polar residues). Residues 351–361 (ADAEEDDEVKV) show a composition bias toward acidic residues.

This sequence belongs to the BORG/CEP family. As to quaternary structure, interacts with RHOQ and CDC42, in a GTP-dependent manner.

The protein resides in the endomembrane system. It is found in the cytoplasm. The protein localises to the cytoskeleton. Its function is as follows. Probably involved in the organization of the actin cytoskeleton. Induced membrane extensions in fibroblasts. This is Cdc42 effector protein 1 from Bos taurus (Bovine).